The sequence spans 320 residues: Ubiquitin-like domain-containing CTD phosphatase 1 (320 aa).

Residues 6–77 (VVVIVKWSGK…LKPNFKLMMV (72 aa)) enclose the Ubiquitin-like domain. The FCP1 homology domain maps to 136–296 (PREGKKLLVL…LKLSDYLRKI (161 aa)). Residues Asp-146, Asp-148, and Asp-255 each contribute to the Mg(2+) site.

Mg(2+) is required as a cofactor.

The protein localises to the nucleus. The catalysed reaction is O-phospho-L-seryl-[protein] + H2O = L-seryl-[protein] + phosphate. It catalyses the reaction O-phospho-L-threonyl-[protein] + H2O = L-threonyl-[protein] + phosphate. Its function is as follows. Dephosphorylates 26S nuclear proteasomes, thereby decreasing their proteolytic activity. Recruited to the 19S regulatory particle of the 26S proteasome where it dephosphorylates 19S component Rpt1 which impairs Rpt1 ATPase activity and disrupts 26S proteasome assembly. In Drosophila melanogaster (Fruit fly), this protein is Ubiquitin-like domain-containing CTD phosphatase 1.